The sequence spans 144 residues: Tail fiber protein R (144 aa).

Structural or assembly protein of tail fibers. This is Tail fiber protein R (R) from Enterobacteriaceae (Bacteriophage P1).